We begin with the raw amino-acid sequence, 350 residues long: Small ribosomal subunit biogenesis GTPase RsgA (350 aa).

The span at 1–17 (MSKNKLSKGQQRRVNAN) shows a compositional bias: polar residues. Positions 1–27 (MSKNKLSKGQQRRVNANHQRRLKTSAE) are disordered. In terms of domain architecture, CP-type G spans 104-273 (TSVLTRPDFY…VIDSPGVREF (170 aa)). Residues 160–163 (NKID) and 214–222 (GQSGVGKSS) contribute to the GTP site. 4 residues coordinate Zn(2+): C297, C302, H304, and C310.

This sequence belongs to the TRAFAC class YlqF/YawG GTPase family. RsgA subfamily. Monomer. Associates with 30S ribosomal subunit, binds 16S rRNA. Zn(2+) is required as a cofactor.

It is found in the cytoplasm. In terms of biological role, one of several proteins that assist in the late maturation steps of the functional core of the 30S ribosomal subunit. Helps release RbfA from mature subunits. May play a role in the assembly of ribosomal proteins into the subunit. Circularly permuted GTPase that catalyzes slow GTP hydrolysis, GTPase activity is stimulated by the 30S ribosomal subunit. In Salmonella typhi, this protein is Small ribosomal subunit biogenesis GTPase RsgA.